The sequence spans 77 residues: Putative sulfur carrier protein AF_0188 (77 aa).

The active-site Cysteine persulfide intermediate is the Cys-11.

Belongs to the sulfur carrier protein TusA family.

The chain is Putative sulfur carrier protein AF_0188 from Archaeoglobus fulgidus (strain ATCC 49558 / DSM 4304 / JCM 9628 / NBRC 100126 / VC-16).